Reading from the N-terminus, the 284-residue chain is F-box protein PP2-B5 (284 aa).

The region spanning 32 to 80 (ASFDDLPDDCLAIISSFTSTPRDAFLAALVSKSFGLQFNSDSVWEKFLP) is the F-box domain.

This is F-box protein PP2-B5 (PP2B5) from Arabidopsis thaliana (Mouse-ear cress).